The sequence spans 520 residues: Maturase K (520 aa).

Belongs to the intron maturase 2 family. MatK subfamily.

The protein resides in the plastid. Its subcellular location is the chloroplast. In terms of biological role, usually encoded in the trnK tRNA gene intron. Probably assists in splicing its own and other chloroplast group II introns. This chain is Maturase K, found in Iris cristata (Dwarf crested iris).